Consider the following 108-residue polypeptide: Thioredoxin (108 aa).

The region spanning 2 to 108 (NKIIELTDQN…LKDFLDENIK (107 aa)) is the Thioredoxin domain. An intrachain disulfide couples cysteine 32 to cysteine 35.

It belongs to the thioredoxin family.

Its function is as follows. Participates in various redox reactions through the reversible oxidation of its active center dithiol to a disulfide and catalyzes dithiol-disulfide exchange reactions. This chain is Thioredoxin (trxA), found in Buchnera aphidicola subsp. Schizaphis graminum (strain Sg).